A 520-amino-acid polypeptide reads, in one-letter code: Glutamyl-tRNA(Gln) amidotransferase subunit A (520 aa).

Catalysis depends on charge relay system residues Lys-80 and Ser-155. Ser-179 functions as the Acyl-ester intermediate in the catalytic mechanism.

Belongs to the amidase family. GatA subfamily. Heterotrimer of A, B and C subunits.

It catalyses the reaction L-glutamyl-tRNA(Gln) + L-glutamine + ATP + H2O = L-glutaminyl-tRNA(Gln) + L-glutamate + ADP + phosphate + H(+). Functionally, allows the formation of correctly charged Gln-tRNA(Gln) through the transamidation of misacylated Glu-tRNA(Gln) in organisms which lack glutaminyl-tRNA synthetase. The reaction takes place in the presence of glutamine and ATP through an activated gamma-phospho-Glu-tRNA(Gln). In Renibacterium salmoninarum (strain ATCC 33209 / DSM 20767 / JCM 11484 / NBRC 15589 / NCIMB 2235), this protein is Glutamyl-tRNA(Gln) amidotransferase subunit A.